The sequence spans 380 residues: Succinyl-diaminopimelate desuccinylase (380 aa).

Histidine 70 contributes to the Zn(2+) binding site. Aspartate 72 is a catalytic residue. Residue aspartate 104 coordinates Zn(2+). The Proton acceptor role is filled by glutamate 138. Glutamate 139, glutamate 167, and histidine 353 together coordinate Zn(2+).

This sequence belongs to the peptidase M20A family. DapE subfamily. As to quaternary structure, homodimer. Zn(2+) is required as a cofactor. Requires Co(2+) as cofactor.

The catalysed reaction is N-succinyl-(2S,6S)-2,6-diaminopimelate + H2O = (2S,6S)-2,6-diaminopimelate + succinate. It participates in amino-acid biosynthesis; L-lysine biosynthesis via DAP pathway; LL-2,6-diaminopimelate from (S)-tetrahydrodipicolinate (succinylase route): step 3/3. In terms of biological role, catalyzes the hydrolysis of N-succinyl-L,L-diaminopimelic acid (SDAP), forming succinate and LL-2,6-diaminopimelate (DAP), an intermediate involved in the bacterial biosynthesis of lysine and meso-diaminopimelic acid, an essential component of bacterial cell walls. This Ectopseudomonas mendocina (strain ymp) (Pseudomonas mendocina) protein is Succinyl-diaminopimelate desuccinylase.